A 491-amino-acid polypeptide reads, in one-letter code: 3-phosphoinositide-dependent protein kinase 1 (491 aa).

Residues 44–311 (FEFGKIYGVG…YVALKRHPFF (268 aa)) form the Protein kinase domain. Residues 54–56 (SYS) and K73 contribute to the ATP site. A PIF-pocket region spans residues 75 to 119 (MDKKFITKENKTAYVKLERIVLDQLEHPGIIKLYFTFQDTSSLYM). Residues 77 to 112 (KKFITKENKTAYVKLERIVLDQLEHPGIIKLYFTFQ) are PIF-binding. ATP contacts are provided by residues 122–124 (ESC) and E128. The active-site Proton acceptor is D167. E171 is an ATP binding site. Phosphoserine is present on S177. Residue D185 coordinates ATP. The tract at residues 185–222 (DFGSVKPMQDSQITVLPNAASDDKACTFVGTAAYVPPE) is activation loop. At T211 the chain carries Phosphothreonine; by autocatalysis. A phosphoserine mark is found at S276 and S337. The segment at 321–377 (SQTPPKLAPDPASQTASPERDDTHGSPWNLTHIGDSLATQNEGHSAPPTSSESSGSI) is disordered. Positions 365-376 (SAPPTSSESSGS) are enriched in low complexity. S382 carries the post-translational modification Phosphoserine. In terms of domain architecture, PH spans 386 to 491 (FDSRWQQFLE…KKAIETLQNR (106 aa)).

It belongs to the protein kinase superfamily. AGC Ser/Thr protein kinase family. PDPK1 subfamily. In terms of assembly, interacts with AGC1-5 and AGC1-7. Interacts with the C-terminal PIF domain of the protein kinases D6PK/AGC1-1, OXI1/AGC2-1 and PID. Post-translationally, phosphorylation on Thr-211 in the activation loop is required for full activity. PDK1 itself can autophosphorylate Thr-211, leading to its own activation. As to expression, ubiquitous.

The protein resides in the cytoplasm. Its subcellular location is the membrane. It carries out the reaction L-seryl-[protein] + ATP = O-phospho-L-seryl-[protein] + ADP + H(+). The catalysed reaction is L-threonyl-[protein] + ATP = O-phospho-L-threonyl-[protein] + ADP + H(+). With respect to regulation, activated by phosphatidic acid (PA) and in response to the fungal elicitor xylanase. May couple lipid signals to the activation-loop phosphorylation of several protein kinases of the so-called AGC kinase family. Interacts via its pleckstrin homology domain with phosphatidic acid, PtdIns3P and PtdIns(3,4)P2 and to a lesser extent with PtdIns(4,5)P2 and PtdIns4P. May play a general role in signaling processes controlling the pathogen/stress response, polar auxin transport and development. Transphosphorylates the AGC protein kinases OXI1/AGC2-1, PK1/S6K1, PK19/S6K2 and PID resulting in their activation. This Arabidopsis thaliana (Mouse-ear cress) protein is 3-phosphoinositide-dependent protein kinase 1 (PDPK1).